A 455-amino-acid chain; its full sequence is T-box protein VegT-B (455 aa).

The segment at residues 57-230 (LWTQFHQEGT…HNPFAKGFRE (174 aa)) is a DNA-binding region (T-box). Residues 229 to 241 (REQERSHKRDDVL) show a composition bias toward basic and acidic residues. Disordered regions lie at residues 229–276 (REQE…RIKE) and 295–350 (ANQG…RRLT). Polar residues predominate over residues 308 to 326 (GVNQEQQVPTSSSNFYIKS).

As to quaternary structure, forms a repression complex on the promoters of the nodal/nr1 and siamois genes with the maternal factors tcf7l1/tcf3 and pouf5.1/oct-25. Interacts (via C-terminus) with tcf7l1/tcf3 (via N-terminus). Also interacts with the other POU-domain transcription factors pou5f1.2/oct-91 and pou5f1.3/oct-60. Maternally localized to the vegetal hemisphere of oocytes. Zygotic expression parallels blastopore formation and shifts from dorsal expression in the marginal zone of late blastula and early gastrula stages to a ventral/lateral expression at later stages. During neurula and tailbud stages, expressed in the posterior and anterior ends of the embryo. During tailbud stages, expressed in a subset of interneurons in the neural tube.

The protein localises to the nucleus. Transcription factor required for both mesoderm and endoderm formation in the embryo; signaling determinants and concentration levels may determine which germ layer is formed. Acts together with beta-catenin to activate genes that are responsible for mesoderm induction including wnt-8, eomes t/bra, siamois, mix1 and sox17. Directly binds to promoter DNA. Patterns the mesoderm along the dorsoventral and posterior axis. Activates siamois gene transcription when alone or in combination with beta-catenin, but inhibits siamois transcription in combination with pou5f1.1/oct-25. The chain is T-box protein VegT-B (vegt-b) from Xenopus laevis (African clawed frog).